Here is a 100-residue protein sequence, read N- to C-terminus: uncharacterized protein (100 aa).

The next 2 helical transmembrane spans lie at 30 to 50 and 69 to 89; these read FHIP…PLAF and FLLI…LPFF.

It localises to the cytoplasm. It is found in the nucleus membrane. This is an uncharacterized protein from Schizosaccharomyces pombe (strain 972 / ATCC 24843) (Fission yeast).